A 321-amino-acid chain; its full sequence is Lipoyl synthase (321 aa).

[4Fe-4S] cluster-binding residues include cysteine 68, cysteine 73, cysteine 79, cysteine 94, cysteine 98, cysteine 101, and serine 308. The Radical SAM core domain occupies 80–297 (FNHGTATFMI…RVFAEEIGFT (218 aa)).

This sequence belongs to the radical SAM superfamily. Lipoyl synthase family. [4Fe-4S] cluster is required as a cofactor.

It is found in the cytoplasm. It catalyses the reaction [[Fe-S] cluster scaffold protein carrying a second [4Fe-4S](2+) cluster] + N(6)-octanoyl-L-lysyl-[protein] + 2 oxidized [2Fe-2S]-[ferredoxin] + 2 S-adenosyl-L-methionine + 4 H(+) = [[Fe-S] cluster scaffold protein] + N(6)-[(R)-dihydrolipoyl]-L-lysyl-[protein] + 4 Fe(3+) + 2 hydrogen sulfide + 2 5'-deoxyadenosine + 2 L-methionine + 2 reduced [2Fe-2S]-[ferredoxin]. It functions in the pathway protein modification; protein lipoylation via endogenous pathway; protein N(6)-(lipoyl)lysine from octanoyl-[acyl-carrier-protein]: step 2/2. In terms of biological role, catalyzes the radical-mediated insertion of two sulfur atoms into the C-6 and C-8 positions of the octanoyl moiety bound to the lipoyl domains of lipoate-dependent enzymes, thereby converting the octanoylated domains into lipoylated derivatives. The polypeptide is Lipoyl synthase (Shewanella woodyi (strain ATCC 51908 / MS32)).